Reading from the N-terminus, the 247-residue chain is 5'-nucleotidase SurE (247 aa).

Residues Asp-8, Asp-9, Ser-39, and Asn-91 each contribute to the a divalent metal cation site.

It belongs to the SurE nucleotidase family. It depends on a divalent metal cation as a cofactor.

The protein localises to the cytoplasm. It catalyses the reaction a ribonucleoside 5'-phosphate + H2O = a ribonucleoside + phosphate. Nucleotidase that shows phosphatase activity on nucleoside 5'-monophosphates. This chain is 5'-nucleotidase SurE, found in Leptospira biflexa serovar Patoc (strain Patoc 1 / Ames).